Reading from the N-terminus, the 636-residue chain is tRNA uridine 5-carboxymethylaminomethyl modification enzyme MnmG (636 aa).

18–23 (GAGHAG) provides a ligand contact to FAD. NAD(+) is bound at residue 281 to 295 (GPRYCPSIEDKIVRF).

Belongs to the MnmG family. Homodimer. Heterotetramer of two MnmE and two MnmG subunits. FAD is required as a cofactor.

The protein localises to the cytoplasm. NAD-binding protein involved in the addition of a carboxymethylaminomethyl (cmnm) group at the wobble position (U34) of certain tRNAs, forming tRNA-cmnm(5)s(2)U34. The protein is tRNA uridine 5-carboxymethylaminomethyl modification enzyme MnmG of Lactiplantibacillus plantarum (strain ATCC BAA-793 / NCIMB 8826 / WCFS1) (Lactobacillus plantarum).